Here is a 532-residue protein sequence, read N- to C-terminus: Intercellular adhesion molecule 1 (532 aa).

Residues 1-27 (MAPSSPRPALPALLVLLGALFPGPGNA) form the signal peptide. Topologically, residues 28–480 (QTSVSPPKVI…TVNVLSPRYE (453 aa)) are extracellular. Ig-like C2-type domains follow at residues 41 to 103 (GGSV…QSTA) and 128 to 193 (GKDL…LDLR). Disulfide bonds link C48/C92, C52/C96, and C135/C186. N145 carries an N-linked (GlcNAc...) asparagine glycan. A Cell attachment site; atypical motif is present at residues 152-154 (RGE). Residues N183, N202, N267, and N296 are each glycosylated (N-linked (GlcNAc...) asparagine). 2 consecutive Ig-like C2-type domains span residues 230-297 (DTQG…LGNQ) and 325-378 (GTEV…LEVA). The cysteines at positions 237 and 290 are disulfide-linked. C332 and C371 are disulfide-bonded. N-linked (GlcNAc...) asparagine glycosylation is found at N385 and N406. 3 cysteine pairs are disulfide-bonded: C403/C419, C419/C457, and C431/C457. In terms of domain architecture, Ig-like C2-type 5 spans 412–464 (NSQQTPMCQASGNPLPELKCLKDGTFPLPVGESVTVTRDLEGTYLCRARSTQG). A helical transmembrane segment spans residues 481-503 (IVIITVVAAAVIMGTAGLSTYLY). Topologically, residues 504 to 532 (NRQRKIRKYRLQQAQKGTPMKPNTQATPP) are cytoplasmic. T521 and T530 each carry phosphothreonine.

Belongs to the immunoglobulin superfamily. ICAM family. Homodimer. Interacts with MUC1 and promotes cell aggregation in epithelial cells. Interacts with ARHGEF26/SGEF. Interacts (on T cell side) with CD81, CD247 and CD9 at immunological synapses between antigen-presenting cells and T cells. Post-translationally, monoubiquitinated, which is promoted by MARCH9 and leads to endocytosis.

The protein localises to the membrane. Functionally, ICAM proteins are ligands for the leukocyte adhesion protein LFA-1 (integrin alpha-L/beta-2). During leukocyte trans-endothelial migration, ICAM1 engagement promotes the assembly of endothelial apical cups through ARHGEF26/SGEF and RHOG activation. The protein is Intercellular adhesion molecule 1 (ICAM1) of Pan troglodytes (Chimpanzee).